A 334-amino-acid polypeptide reads, in one-letter code: MSSAPVLAHTREELATLLAAARARGEQVGLVPTMGALHEGHASLVRAARERVTDDGRMGPVVVSVFVNPLQFGANEDLDRYPRTLEADLEVCAREGADIVFAPSVDEVYPGGPPQVTVRPGPLGKILEGKVRPGHFRGVLTVVAKLFGLVRPDVAVFGQKDYQQLALIRRMVLDLALGVEIVAAETVREDDGLALSSRNRYLEPEQREQAVALSRALLAAQENAGYGAEVALDEARAELRAAPGVDLDYLVITDPDLDELPAVVPPGTPARILVAARVGGTRLIDNLPLMLGTRGPAGEASPPNRERSEPGSAEQNKSPGEARTTPSGTSEASE.

34-41 contributes to the ATP binding site; sequence MGALHEGH. Histidine 41 serves as the catalytic Proton donor. A (R)-pantoate-binding site is contributed by glutamine 71. Glutamine 71 serves as a coordination point for beta-alanine. Residue 158 to 161 coordinates ATP; the sequence is GQKD. Residue glutamine 164 coordinates (R)-pantoate. Residues valine 187 and 195 to 198 each bind ATP; that span reads LSSR. The disordered stretch occupies residues 288–334; that stretch reads PLMLGTRGPAGEASPPNRERSEPGSAEQNKSPGEARTTPSGTSEASE. Polar residues predominate over residues 313 to 334; sequence AEQNKSPGEARTTPSGTSEASE.

This sequence belongs to the pantothenate synthetase family. As to quaternary structure, homodimer.

The protein resides in the cytoplasm. The enzyme catalyses (R)-pantoate + beta-alanine + ATP = (R)-pantothenate + AMP + diphosphate + H(+). Its pathway is cofactor biosynthesis; (R)-pantothenate biosynthesis; (R)-pantothenate from (R)-pantoate and beta-alanine: step 1/1. In terms of biological role, catalyzes the condensation of pantoate with beta-alanine in an ATP-dependent reaction via a pantoyl-adenylate intermediate. The sequence is that of Pantothenate synthetase from Nocardioides sp. (strain ATCC BAA-499 / JS614).